Reading from the N-terminus, the 1093-residue chain is GPI ethanolamine phosphate transferase 3, catalytic subunit (1093 aa).

Residues Val-4–Phe-24 traverse the membrane as a helical segment. N-linked (GlcNAc...) asparagine glycosylation is present at Asn-268. The next 9 membrane-spanning stretches (helical) occupy residues Ala-460 to Phe-480, Leu-483 to Val-503, Val-512 to Val-532, Leu-669 to Leu-689, Val-702 to Leu-722, Val-748 to Val-768, Ser-831 to Leu-851, Val-856 to Ala-876, and Phe-945 to Cys-965. The tract at residues Lys-971 to Glu-991 is disordered. 2 helical membrane-spanning segments follow: residues Leu-1018–Leu-1038 and Phe-1052–Leu-1072.

It belongs to the PIGG/PIGN/PIGO family. PIGO subfamily. In terms of assembly, forms the ethanolamine phosphate transferase 3 complex composed by PIGO and PIGF. PIGF is required to stabilize PIGO.

Its subcellular location is the endoplasmic reticulum membrane. It functions in the pathway glycolipid biosynthesis; glycosylphosphatidylinositol-anchor biosynthesis. In terms of biological role, catalytic subunit of the ethanolamine phosphate transferase 3 complex that transfers an ethanolamine phosphate (EtNP) from a phosphatidylethanolamine (PE) to the 6-OH position of the third alpha-1,2-linked mannose of the an alpha-D-Man-(1-&gt;2)-alpha-D-Man-(1-&gt;6)-2-PEtn-alpha-D-Man-(1-&gt;4)-alpha-D-GlcN-(1-&gt;6)-(1-radyl,2-acyl-sn-glycero-3-phospho)-2-acyl-inositol (also termed H6) intermediate to generate a 6-PEtn-alpha-D-Man-(1-&gt;2)-alpha-D-Man-(1-&gt;6)-2-PEtn-alpha-D-Man-(1-&gt;4)-alpha-D-GlcN-(1-&gt;6)-(1-radyl,2-acyl-sn-glycero-3-phospho)-2-acyl-inositol (also termed H7) and participates in the tenth step of the glycosylphosphatidylinositol-anchor biosynthesis. This chain is GPI ethanolamine phosphate transferase 3, catalytic subunit, found in Mus musculus (Mouse).